The chain runs to 491 residues: Stromelysin-3 (491 aa).

The signal sequence occupies residues 1 to 35; sequence MARAACLLRAISRALLLPLPLLLLLLLLLPPQLMA. The propeptide at 36–101 is activation peptide; sequence RARPPENHRH…VLNARNRQKR (66 aa). The short motif at 82 to 89 is the Cysteine switch element; sequence LRCGVPDP. Cys84, His168, and Asp170 together coordinate Zn(2+). Ca(2+) is bound by residues Asp175, Gly176, Gly178, and Ile180. Residues His183, His196, and His218 each contribute to the Zn(2+) site. Glu219 is an active-site residue. Residues His222 and His228 each coordinate Zn(2+). Positions 260 to 279 are disordered; the sequence is YGRPQLTPTSPTPTLSSQAG. Residues 263-277 show a composition bias toward low complexity; it reads PQLTPTSPTPTLSSQ. An intrachain disulfide couples Cys297 to Cys483. Hemopexin repeat units lie at residues 298–342, 343–385, 387–435, and 436–483; these read ETSF…WQGL, PSPV…KLGL, GSPV…WRGV, and PSEI…FFDC.

This sequence belongs to the peptidase M10A family. It depends on Ca(2+) as a cofactor. Requires Zn(2+) as cofactor. The precursor is cleaved by a furin endopeptidase. In terms of tissue distribution, highly expressed in ovary and uterus.

The protein localises to the secreted. It localises to the extracellular space. The protein resides in the extracellular matrix. May play an important role in the progression of epithelial malignancies. In Rattus norvegicus (Rat), this protein is Stromelysin-3 (Mmp11).